We begin with the raw amino-acid sequence, 577 residues long: Arginine--tRNA ligase (577 aa).

A 'HIGH' region motif is present at residues 122–132 (PNVAKEMHVGH).

The protein belongs to the class-I aminoacyl-tRNA synthetase family. Monomer.

The protein resides in the cytoplasm. It catalyses the reaction tRNA(Arg) + L-arginine + ATP = L-arginyl-tRNA(Arg) + AMP + diphosphate. In Salmonella paratyphi B (strain ATCC BAA-1250 / SPB7), this protein is Arginine--tRNA ligase.